The primary structure comprises 580 residues: DNA mismatch repair protein MutL (580 aa).

Belongs to the DNA mismatch repair MutL/HexB family.

This protein is involved in the repair of mismatches in DNA. It is required for dam-dependent methyl-directed DNA mismatch repair. May act as a 'molecular matchmaker', a protein that promotes the formation of a stable complex between two or more DNA-binding proteins in an ATP-dependent manner without itself being part of a final effector complex. The chain is DNA mismatch repair protein MutL from Chlamydia caviae (strain ATCC VR-813 / DSM 19441 / 03DC25 / GPIC) (Chlamydophila caviae).